We begin with the raw amino-acid sequence, 1289 residues long: MANVWGVRLADSLSSPTIETRTRHYTLRDFCSDLDAVAGKEPWRPLRNQRTNDIVAVQLFRPLQGLVLDTQFYGFPGIFSEWEQFIKEKLRVLKYEVLRIYPISNYNHERVNVFVANALVGAFLSNQAFYDLLPLLVINDTMINDLLGTGAALSQFFQSHGEVLEVAAGRKYLQMKNYSNDDDDPPLFAKDLSDYAKAFYSDTFETLDRFFWTHDSSAGVLVHYDKPTNGNHYILGTLTQMVSAPPHIINATDALLLESCLEQFAANVRARPAQPVARLDQCYHLRWGAQYVGEDSLTYRLGVLSLLATNGYQLARPIPKQLTNRWLSSFVSQVMSDGVNETPLWPQERYVQIAYDSPSVVDGATHYGYVRRNQLRLGMRVSALQSLSDTPAPIQWLPQYTIEQAAVDEGDLMVSRLTQLPLRPDYGSIWVGDALSYYVDYNRSHRVVLSSELPQLPDTYFDGDEQYGRSLFSLARKIGDRSLIKDTAVLKHAYQAIDPNTGKEYLRAGQSVAYFGASAGHSGADQPLVIEPWTQGKISGVPPPSSVRQFGYDVAKGAIVDLARPFPSGDYQFVYSDVDQVVDGHDDLSISSGLVESLLDSCMHATSPGGSFVMKINFPTRTVWHYIEQKILPNITSYMLIKPFVTNNVELFFVAFGVHQQSALTWTSGVYFFLVDHFYRYETLSTISRQLPSFGYVDDGSSVTGIEMISLENPGFSNMTQAARVGISGLCANVGNARKLISIHESHGARVLTITSRRSPASARRKARLRYLPLVDPRSLEVQARTILPSNPVLFDNVNGASPHVCLTMMYNFEVSSAVYDGDVVLDLGTGPEAKILELIPPTSPVTCVDIRPTAQPSGCWNVRTTFLELDYLSDGWITGIRGDIVTCMLSLGAAAAGKSMTFDAAFQQLVKVLTKSTANVLLIQVNCPTDVIRTIKGYLEIDQTNKRYRFPKFGRDEPYSDMDSLERICRAAWPNCSITWVPLSYDLRWTKLALLESTTLSSASVRIAELMYKYMPVMRIDIHGLPMEKQGNFIVGQNCSLTIPGFNAQDVFNCYFNSALAFSTEDVNSAMIPQVTAQFDANKGEWSLDMVFSDAGIYTMQALVGSNANPVSLGSFVVDSPDVDITDAWPAQLDFTIAGTDVDITVNPYYRLMAFVRIDGQWQIANPDKFQFFSSSTGTLVMNVKLDIADRYLLYYIRDVQSRDVGFYIQHPLQLLNTITLPTNEDLFLSAPDMREWAVKESGNTICILNSQGFVPPQDWDVLTDTISWSPSLPTYVVPPGDYTLTPL.

893–900 (GAAAAGKS) provides a ligand contact to ATP.

Belongs to the orthoreovirus lambda-2 protein family. Interacts with protein mu-NS; in viral inclusions.

The protein localises to the virion. It carries out the reaction a 5'-end diphospho-ribonucleoside in mRNA + GTP + H(+) = a 5'-end (5'-triphosphoguanosine)-ribonucleoside in mRNA + diphosphate. It catalyses the reaction a 5'-end (5'-triphosphoguanosine)-ribonucleoside in mRNA + S-adenosyl-L-methionine = a 5'-end (N(7)-methyl 5'-triphosphoguanosine)-ribonucleoside in mRNA + S-adenosyl-L-homocysteine. Its function is as follows. Outer capsid protein involved in mRNA capping. Catalyzes the last 3 enzymatic activities for formation of the 5' cap structure on the viral plus-strand transcripts, namely the RNA guanylyltransferase, RNA-7N- and RNA-2'O-methyltransferase activities. The chain is Outer capsid protein lambda-2 (L2) from Reovirus type 1 (strain Lang) (T1L).